A 485-amino-acid polypeptide reads, in one-letter code: Sodium-coupled neutral amino acid symporter 1 (485 aa).

Residues 1–74 (MMHFKSGLEL…EYIPGTTSLG (74 aa)) lie on the Cytoplasmic side of the membrane. A Phosphoserine modification is found at serine 6. Threonine 11 bears the Phosphothreonine mark. A phosphoserine mark is found at serine 25, serine 28, serine 49, and serine 52. Threonine 54 is modified (phosphothreonine). Residue serine 56 is modified to Phosphoserine. A helical membrane pass occupies residues 75 to 97 (MSVFNLSNAIMGSGILGLAFALA). At 98–112 (NTGILLFLILLTSVT) the chain is on the extracellular side. The helical transmembrane segment at 113–133 (LLSIYSINLLLICSKETGCMV) threads the bilayer. Over 134-148 (YEKLGEQVFGTTGKL) the chain is Cytoplasmic. The helical transmembrane segment at 149 to 169 (VIFGATSLQNTGAMLSYLFIV) threads the bilayer. The Extracellular portion of the chain corresponds to 170–188 (KNELPSAIKSLMGEEETFS). A helical transmembrane segment spans residues 189–211 (AWYVDGRVLVVMVTFGIILPLCL). Residues 212 to 216 (LKNLG) lie on the Cytoplasmic side of the membrane. The chain crosses the membrane as a helical span at residues 217 to 237 (YLGYTSGFSLSCMVFFLIVVI). Over 238–273 (YKKFQIPCMNGEQNSTVSANVTDACTPKYVTFNSKT) the chain is Extracellular. An intrachain disulfide couples cysteine 245 to cysteine 262. 2 N-linked (GlcNAc...) asparagine glycosylation sites follow: asparagine 251 and asparagine 257. The chain crosses the membrane as a helical span at residues 274–294 (VYALPTIAFAFVCHPSVLPIY). Residues 295-310 (SELKDRSQKKMQMVSN) are Cytoplasmic-facing. The chain crosses the membrane as a helical span at residues 311–331 (ISFFAMFVMYFLTAIFGYLTF). Residues 332-348 (YEKVQSDLLHKYQSTGD) lie on the Extracellular side of the membrane. Residues 349–369 (ILILTVRLAVIVAVILTVPVL) traverse the membrane as a helical segment. Over 370–391 (FFTVRSSLFELAKKTKFHLCRH) the chain is Cytoplasmic. Residues 392-412 (VLVTIILLVIINLLVIFIPSM) form a helical membrane-spanning segment. Over 413 to 414 (KD) the chain is Extracellular. The chain crosses the membrane as a helical span at residues 415–435 (IFGVVGVTSANMLIFILPSSL). Residues 436–450 (YLKITNQDGDKNTQR) are Cytoplasmic-facing. A helical transmembrane segment spans residues 451–471 (IWAALFLALGVLFSLISIPLV). Over 472–485 (IYDWACSSSNGEGH) the chain is Extracellular.

The protein belongs to the amino acid/polyamine transporter 2 family. Post-translationally, N-glycosylation plays an important role in the L-glutamine transport. As to expression, specifically expressed in brain with the highest levels in cerebellum and thalamus (at protein level). Expressed in glutamatergic, GABAergic and a subset of dopaminergic neurons of the substantia nigra and cholinergic motoneurons (at protein level). Also expressed by ependymal cells lining the ventricle (at protein level). Expression is also detected in spinal cord, heart, colon and placenta.

Its subcellular location is the cell membrane. It carries out the reaction L-glutamine(in) + Na(+)(in) = L-glutamine(out) + Na(+)(out). The catalysed reaction is L-alanine(in) + Na(+)(in) = L-alanine(out) + Na(+)(out). The enzyme catalyses L-asparagine(in) + Na(+)(in) = L-asparagine(out) + Na(+)(out). It catalyses the reaction L-histidine(in) + Na(+)(in) = L-histidine(out) + Na(+)(out). It carries out the reaction L-serine(in) + Na(+)(in) = L-serine(out) + Na(+)(out). The catalysed reaction is L-cysteine(in) + Na(+)(in) = L-cysteine(out) + Na(+)(out). The enzyme catalyses L-methionine(in) + Na(+)(in) = L-methionine(out) + Na(+)(out). It catalyses the reaction glycine(in) + Na(+)(in) = glycine(out) + Na(+)(out). It carries out the reaction L-threonine(in) + Na(+)(in) = L-threonine(out) + Na(+)(out). The catalysed reaction is L-proline(in) + Na(+)(in) = L-proline(out) + Na(+)(out). With respect to regulation, inhibited by alpha-(methylamino)isobutyric acid (MeAIB). Inhibited by lithium, potassium, choline ions, N-methylglucamine. The pH dependence has an allosteric effect on the transport. In terms of biological role, symporter that cotransports short-chain neutral amino acids and sodium ions from the extraccellular to the intracellular side of the cell membrane. The transport is elctrogenic, pH dependent and driven by the Na(+) electrochemical gradient. Participates in the astroglia-derived glutamine transport into GABAergic interneurons for neurotransmitter GABA de novo synthesis. May also contributes to amino acid transport in placental trophoblast. Regulates synaptic plasticity. The chain is Sodium-coupled neutral amino acid symporter 1 from Rattus norvegicus (Rat).